A 130-amino-acid polypeptide reads, in one-letter code: Small ribosomal subunit protein uS8 (130 aa).

It belongs to the universal ribosomal protein uS8 family. In terms of assembly, part of the 30S ribosomal subunit. Contacts proteins S5 and S12.

Functionally, one of the primary rRNA binding proteins, it binds directly to 16S rRNA central domain where it helps coordinate assembly of the platform of the 30S subunit. This chain is Small ribosomal subunit protein uS8, found in Pectobacterium carotovorum subsp. carotovorum (strain PC1).